Reading from the N-terminus, the 489-residue chain is UDP-N-acetylmuramoyl-L-alanyl-D-glutamate--2,6-diaminopimelate ligase (489 aa).

Ser-34 provides a ligand contact to UDP-N-acetyl-alpha-D-muramoyl-L-alanyl-D-glutamate. 110–116 (GTAGKTS) is a binding site for ATP. UDP-N-acetyl-alpha-D-muramoyl-L-alanyl-D-glutamate-binding positions include 152–153 (TT), Ser-179, Gln-185, and Arg-187. Lys-219 carries the post-translational modification N6-carboxylysine. Residues Arg-383, 407-410 (DNPR), Gly-455, and Glu-459 each bind meso-2,6-diaminopimelate. The short motif at 407 to 410 (DNPR) is the Meso-diaminopimelate recognition motif element.

It belongs to the MurCDEF family. MurE subfamily. Mg(2+) is required as a cofactor. In terms of processing, carboxylation is probably crucial for Mg(2+) binding and, consequently, for the gamma-phosphate positioning of ATP.

The protein resides in the cytoplasm. The catalysed reaction is UDP-N-acetyl-alpha-D-muramoyl-L-alanyl-D-glutamate + meso-2,6-diaminopimelate + ATP = UDP-N-acetyl-alpha-D-muramoyl-L-alanyl-gamma-D-glutamyl-meso-2,6-diaminopimelate + ADP + phosphate + H(+). It participates in cell wall biogenesis; peptidoglycan biosynthesis. In terms of biological role, catalyzes the addition of meso-diaminopimelic acid to the nucleotide precursor UDP-N-acetylmuramoyl-L-alanyl-D-glutamate (UMAG) in the biosynthesis of bacterial cell-wall peptidoglycan. The polypeptide is UDP-N-acetylmuramoyl-L-alanyl-D-glutamate--2,6-diaminopimelate ligase (Agrobacterium fabrum (strain C58 / ATCC 33970) (Agrobacterium tumefaciens (strain C58))).